The following is a 260-amino-acid chain: Proteasome subunit alpha (260 aa).

Over residues 237–248 (ASTDAPAAAADS) the composition is skewed to low complexity. The interval 237–260 (ASTDAPAAAADSADVEERPDSEAP) is disordered. The segment covering 251–260 (VEERPDSEAP) has biased composition (basic and acidic residues).

This sequence belongs to the peptidase T1A family. As to quaternary structure, the 20S proteasome core is composed of 14 alpha and 14 beta subunits that assemble into four stacked heptameric rings, resulting in a barrel-shaped structure. The two inner rings, each composed of seven catalytic beta subunits, are sandwiched by two outer rings, each composed of seven alpha subunits. The catalytic chamber with the active sites is on the inside of the barrel. Has a gated structure, the ends of the cylinder being occluded by the N-termini of the alpha-subunits. Is capped by the proteasome-associated ATPase, ARC.

Its subcellular location is the cytoplasm. Its pathway is protein degradation; proteasomal Pup-dependent pathway. Its activity is regulated as follows. The formation of the proteasomal ATPase ARC-20S proteasome complex, likely via the docking of the C-termini of ARC into the intersubunit pockets in the alpha-rings, may trigger opening of the gate for substrate entry. Interconversion between the open-gate and close-gate conformations leads to a dynamic regulation of the 20S proteasome proteolysis activity. In terms of biological role, component of the proteasome core, a large protease complex with broad specificity involved in protein degradation. This chain is Proteasome subunit alpha, found in Salinispora tropica (strain ATCC BAA-916 / DSM 44818 / JCM 13857 / NBRC 105044 / CNB-440).